Reading from the N-terminus, the 573-residue chain is Protein phosphatase EYA3 (573 aa).

At Met-1 the chain carries N-acetylmethionine. Disordered stretches follow at residues 1-46 and 236-296; these read MEEE…LASN and TYQS…DATS. A compositionally biased stretch (polar residues) spans 20–46; it reads SGEQTISQVSNPDVSDQKPETSSLASN. The span at 254 to 271 shows a compositional bias: low complexity; the sequence is LSSGDPSTSPSLSQTTPS. Residues Ser-262 and Ser-266 each carry the phosphoserine modification. Asp-309 (nucleophile) is an active-site residue. Positions 309 and 311 each coordinate Mg(2+). The active-site Proton donor is the Asp-311. Phosphoserine is present on residues Ser-438 and Ser-472. Mg(2+) is bound at residue Asp-537.

This sequence belongs to the HAD-like hydrolase superfamily. EYA family. In terms of assembly, interacts with SIX1 and DACH1, and probably SIX2, SIX4, SIX5. It depends on Mg(2+) as a cofactor. In terms of processing, ser-266 phosphorylation is required for localization at sites of DNA damage and directing interaction with H2AX.

The protein resides in the cytoplasm. It is found in the nucleus. The catalysed reaction is O-phospho-L-tyrosyl-[protein] + H2O = L-tyrosyl-[protein] + phosphate. Functionally, tyrosine phosphatase that specifically dephosphorylates 'Tyr-142' of histone H2AX (H2AXY142ph). 'Tyr-142' phosphorylation of histone H2AX plays a central role in DNA repair and acts as a mark that distinguishes between apoptotic and repair responses to genotoxic stress. Promotes efficient DNA repair by dephosphorylating H2AX, promoting the recruitment of DNA repair complexes containing MDC1. Its function as histone phosphatase probably explains its role in transcription regulation during organogenesis. Coactivates SIX1, and seems to coactivate SIX2, SIX4 and SIX5. The repression of precursor cell proliferation in myoblasts by SIX1 is switched to activation through recruitment of EYA3 to the SIX1-DACH1 complex and seems to be dependent on EYA3 phosphatase activity. May be involved in development of the eye. In Homo sapiens (Human), this protein is Protein phosphatase EYA3 (EYA3).